The primary structure comprises 447 residues: Putative metabolite transport protein HI_0418 (447 aa).

The Cytoplasmic segment spans residues 1-28 (MCKPQQKHYGRQVMNTQNSLKQVATATM). Residues 29 to 49 (VGTAIEYFDNYIYAMAAVLVF) traverse the membrane as a helical segment. Residues 50–63 (NHQFFHAVDPLSGQ) are Periplasmic-facing. The helical transmembrane segment at 64–84 (IAALSTLALTFIARPLGAILF) threads the bilayer. Residues 85-96 (GHFGDRFGRKNT) are Cytoplasmic-facing. A helical membrane pass occupies residues 97-117 (FVMSLLLMGISTVVIGLLPTY). The Periplasmic segment spans residues 118–119 (DS). Residues 120–140 (IGIWATILLCLCRIGQGIGLG) form a helical membrane-spanning segment. The Cytoplasmic portion of the chain corresponds to 141 to 167 (GEWGGAALVAVENAPEGKRGWYGTFPQ). The chain crosses the membrane as a helical span at residues 168–188 (LGAPLGLLLANGVFLGITAIF). The Periplasmic portion of the chain corresponds to 189 to 194 (GQEAMT). A helical membrane pass occupies residues 195–215 (EWAWRIPFLSSVILVAIGLYV). Topologically, residues 216-249 (RLKLTEAPIFLAALNKPKPKRLPMLEVVTTHFKP) are cytoplasmic. Residues 250-270 (FFLGMLVCIAGYVLFYIMIAF) traverse the membrane as a helical segment. The Periplasmic segment spans residues 271–295 (SQIYAKSAPTVSEAGYAMGLGFSPQ). The helical transmembrane segment at 296–316 (IFTALLMASAVSLAITIAASG) threads the bilayer. At 317-325 (KYIDKIGRR) the chain is on the cytoplasmic side. The chain crosses the membrane as a helical span at residues 326–346 (TWLIWTTVGVAIFGLSLPLFL). Topologically, residues 347–354 (ENGTTTSL) are periplasmic. A helical transmembrane segment spans residues 355–375 (FWFLFIGMGLIGMGYGPLASF). Residues 376 to 390 (LPELFPTHARYSGAS) are Cytoplasmic-facing. A helical transmembrane segment spans residues 391–411 (LTYNIAGLFGASVAAIIALPL). The Periplasmic portion of the chain corresponds to 412-418 (NAHYGLK). A helical transmembrane segment spans residues 419-439 (GVGIYLTLNAVLSLVGLWFIS). At 440-447 (ETKDKLLS) the chain is on the cytoplasmic side.

It belongs to the major facilitator superfamily. Metabolite:H+ Symporter (MHS) family (TC 2.A.1.6) family.

The protein localises to the cell inner membrane. This is Putative metabolite transport protein HI_0418 from Haemophilus influenzae (strain ATCC 51907 / DSM 11121 / KW20 / Rd).